Consider the following 475-residue polypeptide: 3-isopropylmalate dehydratase large subunit (475 aa).

Residues C348, C408, and C411 each contribute to the [4Fe-4S] cluster site.

It belongs to the aconitase/IPM isomerase family. LeuC type 1 subfamily. As to quaternary structure, heterodimer of LeuC and LeuD. The cofactor is [4Fe-4S] cluster.

The enzyme catalyses (2R,3S)-3-isopropylmalate = (2S)-2-isopropylmalate. It participates in amino-acid biosynthesis; L-leucine biosynthesis; L-leucine from 3-methyl-2-oxobutanoate: step 2/4. In terms of biological role, catalyzes the isomerization between 2-isopropylmalate and 3-isopropylmalate, via the formation of 2-isopropylmaleate. In Acidobacterium capsulatum (strain ATCC 51196 / DSM 11244 / BCRC 80197 / JCM 7670 / NBRC 15755 / NCIMB 13165 / 161), this protein is 3-isopropylmalate dehydratase large subunit.